Consider the following 302-residue polypeptide: Glycine--tRNA ligase alpha subunit (302 aa).

Belongs to the class-II aminoacyl-tRNA synthetase family. As to quaternary structure, tetramer of two alpha and two beta subunits.

The protein localises to the cytoplasm. The enzyme catalyses tRNA(Gly) + glycine + ATP = glycyl-tRNA(Gly) + AMP + diphosphate. The protein is Glycine--tRNA ligase alpha subunit of Xanthomonas oryzae pv. oryzae (strain PXO99A).